We begin with the raw amino-acid sequence, 67 residues long: Major cold shock protein (67 aa).

Positions 4–63 (GTVKWFNAEKGFGFISTENGQDVFAHFSAIQTSGFKTLEEGQKVAFDVEEGQRGPQAVNI) constitute a CSD domain.

As to quaternary structure, homodimer.

The protein resides in the cytoplasm. This is Major cold shock protein (cspA) from Streptococcus pyogenes serotype M6 (strain ATCC BAA-946 / MGAS10394).